A 128-amino-acid chain; its full sequence is Protein Wnt-8 (128 aa).

Serine 1 carries O-palmitoleoyl serine lipidation. 2 disulfide bridges follow: cysteine 69–cysteine 109 and cysteine 85–cysteine 102. A glycan (N-linked (GlcNAc...) asparagine) is linked at asparagine 72.

This sequence belongs to the Wnt family. Palmitoleoylation is required for efficient binding to frizzled receptors. Depalmitoleoylation leads to Wnt signaling pathway inhibition. Post-translationally, proteolytic processing by tiki1 and tiki2 promotes oxidation and formation of large disulfide-bond oligomers, leading to inactivation of wnt8.

It localises to the secreted. It is found in the extracellular space. The protein resides in the extracellular matrix. Its function is as follows. Ligand for members of the frizzled family of seven transmembrane receptors. Probable developmental protein. May be a signaling molecule which affects the development of discrete regions of tissues. Is likely to signal over only few cell diameters. This chain is Protein Wnt-8 (WNT-8), found in Evasterias troschelii (Mottled sea star).